The primary structure comprises 93 residues: Small ribosomal subunit protein uS19 (93 aa).

It belongs to the universal ribosomal protein uS19 family.

Protein S19 forms a complex with S13 that binds strongly to the 16S ribosomal RNA. This Blochmanniella floridana protein is Small ribosomal subunit protein uS19.